The primary structure comprises 178 residues: Large ribosomal subunit protein eL20 (178 aa).

This sequence belongs to the eukaryotic ribosomal protein eL20 family.

The polypeptide is Large ribosomal subunit protein eL20 (RPL18A) (Oryza sativa subsp. japonica (Rice)).